The chain runs to 485 residues: MTLAETFNTENHPNPLITLNYEPALESLGNDYYDEVTAAEFPQLTLRWRNDAILPRLGLDPQTVTDEDFITAFGLFQGRKPLLALRYHGYQFGEYNPNLGDGRGFLYGQVRGTDGELYDFGTKGSGRTPYSRGGDGMLTLKGGVREVLAAEALHQLGVRTSRCLTMIETGLGLWRGDEPSPTRSSVMVRMNKSHIRFGTFERLHYFQRSDLIKKLLDHVIEHYYQHLTHESDKYALFYAELVKRVAELVAQWMAAGFCHAVLNTDNMSITGESFDYGPYAFIPTYNPYFTAAYFDYYGRYCYIQQPSICQWNLEMLQVPLRAVIDKADMEAGLAKFNEYCHAEYHSLMLKKLGFEQLTTPEAEELLSLTLKFLQESQVGYHQFFYEMARTFSVKWRDEPGLVLSGSDIVPPSGTDANFDNWCVLYHKILNNFDYEQVKIIAQNLTYYNPKTSLLRPTIEEAWEPIVQEDNWQPFYDLVKSIQSRG.

Residues G100, G102, R103, K123, D135, G136, R189, and R196 each contribute to the ATP site. The active-site Proton acceptor is D265. Mg(2+) contacts are provided by N266 and D275. ATP is bound at residue D275.

Belongs to the SELO family. Mg(2+) serves as cofactor. The cofactor is Mn(2+).

It catalyses the reaction L-seryl-[protein] + ATP = 3-O-(5'-adenylyl)-L-seryl-[protein] + diphosphate. The catalysed reaction is L-threonyl-[protein] + ATP = 3-O-(5'-adenylyl)-L-threonyl-[protein] + diphosphate. The enzyme catalyses L-tyrosyl-[protein] + ATP = O-(5'-adenylyl)-L-tyrosyl-[protein] + diphosphate. It carries out the reaction L-histidyl-[protein] + UTP = N(tele)-(5'-uridylyl)-L-histidyl-[protein] + diphosphate. It catalyses the reaction L-seryl-[protein] + UTP = O-(5'-uridylyl)-L-seryl-[protein] + diphosphate. The catalysed reaction is L-tyrosyl-[protein] + UTP = O-(5'-uridylyl)-L-tyrosyl-[protein] + diphosphate. Nucleotidyltransferase involved in the post-translational modification of proteins. It can catalyze the addition of adenosine monophosphate (AMP) or uridine monophosphate (UMP) to a protein, resulting in modifications known as AMPylation and UMPylation. This chain is Protein nucleotidyltransferase YdiU, found in Trichormus variabilis (strain ATCC 29413 / PCC 7937) (Anabaena variabilis).